A 283-amino-acid polypeptide reads, in one-letter code: Thymidylate synthase (283 aa).

Arg-22 serves as a coordination point for dUMP. Residue Cys-160 is the Nucleophile of the active site. Residues 180–183, Asn-191, and 221–223 each bind dUMP; these read RSCD and HIY. Position 183 (Asp-183) interacts with (6R)-5,10-methylene-5,6,7,8-tetrahydrofolate. Residue Ser-282 coordinates (6R)-5,10-methylene-5,6,7,8-tetrahydrofolate.

It belongs to the thymidylate synthase family. Bacterial-type ThyA subfamily. In terms of assembly, homodimer.

The protein resides in the cytoplasm. The enzyme catalyses dUMP + (6R)-5,10-methylene-5,6,7,8-tetrahydrofolate = 7,8-dihydrofolate + dTMP. The protein operates within pyrimidine metabolism; dTTP biosynthesis. Catalyzes the reductive methylation of 2'-deoxyuridine-5'-monophosphate (dUMP) to 2'-deoxythymidine-5'-monophosphate (dTMP) while utilizing 5,10-methylenetetrahydrofolate (mTHF) as the methyl donor and reductant in the reaction, yielding dihydrofolate (DHF) as a by-product. This enzymatic reaction provides an intracellular de novo source of dTMP, an essential precursor for DNA biosynthesis. In Psychromonas ingrahamii (strain DSM 17664 / CCUG 51855 / 37), this protein is Thymidylate synthase.